Consider the following 1477-residue polypeptide: Neurexin-1 (1477 aa).

An N-terminal signal peptide occupies residues 1-30; sequence MGTALLQRGGCFLLCLSLLLLGCWAELGSG. Residues 31–217 form the Laminin G-like 1 domain; it reads LEFPGAEGQW…PPNSGGGSPC (187 aa). The Extracellular segment spans residues 31-1401; it reads LEFPGAEGQW…EVIRESSSTT (1371 aa). N-linked (GlcNAc...) asparagine glycans are attached at residues Asn125 and Asn190. Positions 198–221 are disordered; it reads DSGEVKLDDEPPNSGGGSPCEAGE. The EGF-like 1 domain occupies 213–256; that stretch reads GGSPCEAGEEGEGGVCLNGGVCSVVDDQAVCDCSRTGFRGKDCS. Cystine bridges form between Cys228–Cys243 and Cys245–Cys255. Laminin G-like domains follow at residues 283-473 and 480-672; these read IATF…AFKC and DPIT…KPSC. Ca(2+)-binding residues include Asp329, Leu346, and Met407. Intrachain disulfides connect Cys437–Cys473, Cys643–Cys672, Cys680–Cys691, Cys685–Cys700, and Cys702–Cys712. The 38-residue stretch at 676-713 folds into the EGF-like 2 domain; it reads TAKPCLSNPCKNNGMCRDGWNRYVCDCSGTGYLGRSCE. 2 Laminin G-like domains span residues 718–891 and 905–1080; these read VLSY…IDYC and DPVT…ERGC. 2 residues coordinate Ca(2+): Asp765 and Leu782. An N-linked (GlcNAc...) asparagine glycan is attached at Asn790. Arg841 lines the Ca(2+) pocket. 5 cysteine pairs are disulfide-bonded: Cys883-Cys891, Cys1052-Cys1080, Cys1087-Cys1098, Cys1092-Cys1107, and Cys1109-Cys1119. The EGF-like 3 domain maps to 1083 to 1120; it reads PSTTCQEDSCSNQGVCLQQWDGFSCDCSMTSFSGPLCN. The 169-residue stretch at 1126 to 1294 folds into the Laminin G-like 6 domain; that stretch reads YIFSKGGGQI…DANIAIVGNV (169 aa). The Ca(2+) site is built by Asp1176 and Val1193. An N-linked (GlcNAc...) asparagine glycan is attached at Asn1223. Ca(2+)-binding residues include Ile1245 and Asn1247. The segment at 1325–1390 is disordered; the sequence is TTTLATSTAR…AGGREPYPGS (66 aa). Ser1355 carries an O-linked (Xyl...) (heparan sulfate) serine glycan. The chain crosses the membrane as a helical span at residues 1402 to 1422; that stretch reads GMVVGIVAAAALCILILLYAM. Topologically, residues 1423–1477 are cytoplasmic; sequence YKYRNRDEGSYHVDESRNYISNSAQSNGAVVKEKQPSSAKSSNKNKKNKDKEYYV. The interval 1444–1470 is interaction with CASK; the sequence is NSAQSNGAVVKEKQPSSAKSSNKNKKN. The segment at 1444 to 1477 is disordered; that stretch reads NSAQSNGAVVKEKQPSSAKSSNKNKKNKDKEYYV.

It belongs to the neurexin family. Interacts (via laminin G-like domain 2 and/or laminin G-like domain 6) with NLGN1 forming a heterotetramer, where one NLGN1 dimer interacts with one NRXN1 dimer. Also interacts (via laminin G-like domain 2 and/or laminin G-like domain 6) with NLGN2, NLGN3 and NLGN4L; interactions with NLGN1, NLGN2, NLGN3 and NLGN4L are calcium-dependent. Interacts (via cytoplasmic C-terminal region) with CASK (via the PDZ, SH3 and guanylate kinase-like domains). Interacts (via cytoplasmic C-terminus) with CASKIN1 and APBA1. Interacts (via laminin G-like domain 2) with NXPH1 and NXPH3. Alpha-type isoforms (neurexin-1-alpha) interact (via laminin G-like domain 2 and/or laminin G-like domain 6) with DAG1 (via alpha-dystroglycan chain). Interacts with LRRTM1, LRRTM2, LRRTM3 and LRRTM4. Interacts with SYT13 and SYTL1. Interacts with CBLN1, CBLN2 and, less avidly, with CBLN4. Interacts with CLSTN3. Post-translationally, O-glycosylated; contains heparan sulfate. Heparan sulfate attachment is required for synapse development by mediating interactions with neuroligins and LRRTM2. Brain.

It localises to the presynaptic cell membrane. Cell surface protein involved in cell-cell-interactions, exocytosis of secretory granules and regulation of signal transmission. Function is isoform-specific. Alpha-type isoforms have a long N-terminus with six laminin G-like domains and play an important role in synaptic signal transmission. Alpha-type isoforms play a role in the regulation of calcium channel activity and Ca(2+)-triggered neurotransmitter release at synapses and at neuromuscular junctions. They play an important role in Ca(2+)-triggered exocytosis of secretory granules in pituitary gland. They may affect their functions at synapses and in endocrine cells via their interactions with proteins from the exocytotic machinery. Likewise, alpha-type isoforms play a role in regulating the activity of postsynaptic NMDA receptors, a subtype of glutamate-gated ion channels. Both alpha-type and beta-type isoforms may play a role in the formation or maintenance of synaptic junctions via their interactions (via the extracellular domains) with neuroligin family members, CBLN1 or CBLN2. In vitro, triggers the de novo formation of presynaptic structures. May be involved in specification of excitatory synapses. Alpha-type isoforms were first identified as receptors for alpha-latrotoxin from spider venom. This chain is Neurexin-1 (NRXN1), found in Homo sapiens (Human).